The primary structure comprises 253 residues: 5'/3'-nucleotidase SurE (253 aa).

A divalent metal cation is bound by residues D8, D9, S39, and N92.

It belongs to the SurE nucleotidase family. It depends on a divalent metal cation as a cofactor.

The protein localises to the cytoplasm. It catalyses the reaction a ribonucleoside 5'-phosphate + H2O = a ribonucleoside + phosphate. The catalysed reaction is a ribonucleoside 3'-phosphate + H2O = a ribonucleoside + phosphate. The enzyme catalyses [phosphate](n) + H2O = [phosphate](n-1) + phosphate + H(+). Functionally, nucleotidase with a broad substrate specificity as it can dephosphorylate various ribo- and deoxyribonucleoside 5'-monophosphates and ribonucleoside 3'-monophosphates with highest affinity to 3'-AMP. Also hydrolyzes polyphosphate (exopolyphosphatase activity) with the preference for short-chain-length substrates (P20-25). Might be involved in the regulation of dNTP and NTP pools, and in the turnover of 3'-mononucleotides produced by numerous intracellular RNases (T1, T2, and F) during the degradation of various RNAs. The sequence is that of 5'/3'-nucleotidase SurE from Salmonella typhimurium (strain LT2 / SGSC1412 / ATCC 700720).